We begin with the raw amino-acid sequence, 188 residues long: MTSISNVSKGSIIRFKGEPHIIESLVHRTPGNLRAFYQANMKNLKTGRNVEYRFSASESVDLIVTERKQYQYLYRDGNDYVMMDNDTFDQINVQELSIGPSARFLKDGINVTIIFSDDGSILDVELPTFVEVEVMETSPATKDDRATSGTKPATVETGAEVSVPMFIQCGSVIRVDTRTGEYIERVKK.

This sequence belongs to the elongation factor P family.

The protein resides in the cytoplasm. Its pathway is protein biosynthesis; polypeptide chain elongation. Involved in peptide bond synthesis. Stimulates efficient translation and peptide-bond synthesis on native or reconstituted 70S ribosomes in vitro. Probably functions indirectly by altering the affinity of the ribosome for aminoacyl-tRNA, thus increasing their reactivity as acceptors for peptidyl transferase. The polypeptide is Elongation factor P (Chlorobium limicola (strain DSM 245 / NBRC 103803 / 6330)).